The following is a 238-amino-acid chain: Gem-associated protein 8 (238 aa).

The tract at residues 66-127 (AGHPWDSQGQ…LESDSDDEVE (62 aa)) is disordered. 2 stretches are compositionally biased toward polar residues: residues 72–82 (SQGQHMAQQES) and 96–108 (LRNS…STRG). The span at 113-127 (CEEEELESDSDDEVE) shows a compositional bias: acidic residues. Phosphoserine is present on serine 122. A coiled-coil region spans residues 131–164 (SNMEITEELRQYFAQTERHREERRRQQQLDAERL).

In terms of assembly, part of the core SMN complex that contains SMN1, GEMIN2/SIP1, DDX20/GEMIN3, GEMIN4, GEMIN5, GEMIN6, GEMIN7, GEMIN8 and STRAP/UNRIP. Part of the SMN-Sm complex that contains SMN1, GEMIN2/SIP1, DDX20/GEMIN3, GEMIN4, GEMIN5, GEMIN6, GEMIN7, GEMIN8, STRAP/UNRIP and the Sm proteins SNRPB, SNRPD1, SNRPD2, SNRPD3, SNRPE, SNRPF and SNRPG. Interacts with GEMIN6; the interaction is direct. Interacts with GEMIN7; the interaction is direct. Interacts with SMN1; the interaction is direct. Interacts with GEMIN4; the interaction is direct. As to expression, widely expressed in embryonic tissues (at protein level).

It is found in the nucleus. Its subcellular location is the gem. It localises to the cytoplasm. In terms of biological role, the SMN complex catalyzes the assembly of small nuclear ribonucleoproteins (snRNPs), the building blocks of the spliceosome, and thereby plays an important role in the splicing of cellular pre-mRNAs. Most spliceosomal snRNPs contain a common set of Sm proteins SNRPB, SNRPD1, SNRPD2, SNRPD3, SNRPE, SNRPF and SNRPG that assemble in a heptameric protein ring on the Sm site of the small nuclear RNA to form the core snRNP (Sm core). In the cytosol, the Sm proteins SNRPD1, SNRPD2, SNRPE, SNRPF and SNRPG are trapped in an inactive 6S pICln-Sm complex by the chaperone CLNS1A that controls the assembly of the core snRNP. To assemble core snRNPs, the SMN complex accepts the trapped 5Sm proteins from CLNS1A forming an intermediate. Binding of snRNA inside 5Sm triggers eviction of the SMN complex, thereby allowing binding of SNRPD3 and SNRPB to complete assembly of the core snRNP. The sequence is that of Gem-associated protein 8 (Gemin8) from Mus musculus (Mouse).